Consider the following 235-residue polypeptide: Elongation factor Tu (235 aa).

In terms of domain architecture, tr-type G spans 1–125 (KNMITGAAQM…QVDEYIPAPE (125 aa)). 47–50 (NKQD) lines the GTP pocket.

This sequence belongs to the TRAFAC class translation factor GTPase superfamily. Classic translation factor GTPase family. EF-Tu/EF-1A subfamily. Monomer.

It is found in the cytoplasm. It catalyses the reaction GTP + H2O = GDP + phosphate + H(+). Its function is as follows. GTP hydrolase that promotes the GTP-dependent binding of aminoacyl-tRNA to the A-site of ribosomes during protein biosynthesis. The chain is Elongation factor Tu (tufA) from Leptolyngbya ectocarpi (Phormidium ectocarpi).